The sequence spans 401 residues: Probable plasmid-partitioning protein ParB (401 aa).

Residues Lys232 to Glu272 are disordered.

Belongs to the ParB family.

The protein is Probable plasmid-partitioning protein ParB of Xylella fastidiosa (strain 9a5c).